An 871-amino-acid polypeptide reads, in one-letter code: Phosphoinositide 3-kinase regulatory subunit 5 (871 aa).

An N-acetylmethionine modification is found at M1. Positions 25 to 101 (SLGRRSAPWS…TPHFPPDSDL (77 aa)) are heterodimerization. The segment at 381–413 (MDSGYVEDSEENSEWPQKPGSQKRQGHRRPGQK) is disordered. Phosphoserine occurs at positions 451 and 500. The interaction with beta-gamma G protein dimers stretch occupies residues 646 to 746 (PILADMLLYY…WSNLEKVCTS (101 aa)).

As to quaternary structure, heterodimer of a catalytic subunit (PIK3CG/p120) and a regulatory (PIK3R5a/p101) subunit. Interacts with beta-gamma G protein dimers.

Its subcellular location is the nucleus. It is found in the cytoplasm. It localises to the cell membrane. With respect to regulation, greatly activated by G gamma proteins. Functionally, regulatory subunit of the PI3K gamma complex. Required for recruitment of the catalytic subunit to the plasma membrane via interaction with beta-gamma G protein dimers. Required for G protein-mediated activation of PIK3CG. In Mus musculus (Mouse), this protein is Phosphoinositide 3-kinase regulatory subunit 5 (Pik3r5).